A 320-amino-acid chain; its full sequence is ATP-dependent 6-phosphofructokinase (320 aa).

G11 is an ATP binding site. 21-25 (RAVTK) is a binding site for ADP. Residues 72–73 (RF) and 102–105 (GDGS) each bind ATP. Residue D103 participates in Mg(2+) binding. 125–127 (TID) contributes to the substrate binding site. D127 acts as the Proton acceptor in catalysis. Residue R154 coordinates ADP. Substrate is bound by residues R162 and 169–171 (MGR). Residues 185-187 (GAD) and 213-215 (KDH) each bind ADP. Residues E222, R243, and 249–252 (HMQR) each bind substrate.

Belongs to the phosphofructokinase type A (PFKA) family. ATP-dependent PFK group I subfamily. Prokaryotic clade 'B1' sub-subfamily. In terms of assembly, homotetramer. The cofactor is Mg(2+).

It localises to the cytoplasm. It catalyses the reaction beta-D-fructose 6-phosphate + ATP = beta-D-fructose 1,6-bisphosphate + ADP + H(+). The protein operates within carbohydrate degradation; glycolysis; D-glyceraldehyde 3-phosphate and glycerone phosphate from D-glucose: step 3/4. Its activity is regulated as follows. Allosterically activated by ADP and other diphosphonucleosides, and allosterically inhibited by phosphoenolpyruvate. Functionally, catalyzes the phosphorylation of D-fructose 6-phosphate to fructose 1,6-bisphosphate by ATP, the first committing step of glycolysis. The chain is ATP-dependent 6-phosphofructokinase from Lactobacillus helveticus (strain DPC 4571).